The primary structure comprises 484 residues: uncharacterized protein (484 aa).

Over residues 1 to 14 the composition is skewed to low complexity; that stretch reads MIDSTSTATATSKT. The tract at residues 1–32 is disordered; that stretch reads MIDSTSTATATSKTVELNTNGSKTDASSENGT. Residues 15–32 are compositionally biased toward polar residues; sequence VELNTNGSKTDASSENGT. At Lys305 the chain carries N6-(pyridoxal phosphate)lysine.

This sequence belongs to the class-III pyridoxal-phosphate-dependent aminotransferase family. Pyridoxal 5'-phosphate serves as cofactor.

This is an uncharacterized protein from Schizosaccharomyces pombe (strain 972 / ATCC 24843) (Fission yeast).